A 336-amino-acid polypeptide reads, in one-letter code: Phosphate acyltransferase (336 aa).

This sequence belongs to the PlsX family. As to quaternary structure, homodimer. Probably interacts with PlsY.

The protein resides in the cytoplasm. The catalysed reaction is a fatty acyl-[ACP] + phosphate = an acyl phosphate + holo-[ACP]. It functions in the pathway lipid metabolism; phospholipid metabolism. In terms of biological role, catalyzes the reversible formation of acyl-phosphate (acyl-PO(4)) from acyl-[acyl-carrier-protein] (acyl-ACP). This enzyme utilizes acyl-ACP as fatty acyl donor, but not acyl-CoA. The protein is Phosphate acyltransferase of Pseudomonas fluorescens (strain Pf0-1).